The primary structure comprises 62 residues: Weak neurotoxin 5 (62 aa).

Intrachain disulfides connect Cys3/Cys24, Cys6/Cys11, Cys17/Cys40, Cys44/Cys54, and Cys55/Cys60.

This sequence belongs to the three-finger toxin family. Ancestral subfamily. Orphan group II sub-subfamily. In terms of tissue distribution, expressed by the venom gland.

Its subcellular location is the secreted. Functionally, binds with low affinity to muscular (alpha-1-beta-1-delta-epsilon/CHRNA1-CHRNB1-CHRND-CHRNE) and very low affinity to neuronal (alpha-7/CHRNA7) nicotinic acetylcholine receptor (nAChR). The sequence is that of Weak neurotoxin 5 from Naja naja (Indian cobra).